Here is an 872-residue protein sequence, read N- to C-terminus: MGSLLALLALLLLWGAVAEGPAKKVLTLEGDLVLGGLFPVHQKGGPAEDCGPVNEHRGIQRLEAMLFALDRINRDPHLLPGVRLGAHILDSCSKDTHALEQALDFVRASLSRGADGSRHICPDGSYATHGDAPTAITGVIGGSYSDVSIQVANLLRLFQIPQISYASTSAKLSDKSRYDYFARTVPPDFFQAKAMAEILRFFNWTYVSTVASEGDYGETGIEAFELEARARNICVATSEKVGRAMSRAAFEGVVRALLQKPSARVAVLFTRSEDARELLAASQRLNASFTWVASDGWGALESVVAGSEGAAEGAITIELASYPISDFASYFQSLDPWNNSRNPWFREFWEQRFRCSFRQRDCAAHSLRAVPFEQESKIMFVVNAVYAMAHALHNMHRALCPNTTRLCDAMRPVNGRRLYKDFVLNVKFDAPFRPADTHNEVRFDRFGDGIGRYNIFTYLRAGSGRYRYQKVGYWAEGLTLDTSLIPWASPSAGPLPASRCSEPCLQNEVKSVQPGEVCCWLCIPCQPYEYRLDEFTCADCGLGYWPNASLTGCFELPQEYIRWGDAWAVGPVTIACLGALATLFVLGVFVRHNATPVVKASGRELCYILLGGVFLCYCMTFIFIAKPSTAVCTLRRLGLGTAFSVCYSALLTKTNRIARIFGGAREGAQRPRFISPASQVAICLALISGQLLIVVAWLVVEAPGTGKETAPERREVVTLRCNHRDASMLGSLAYNVLLIALCTLYAFKTRKCPENFNEAKFIGFTMYTTCIIWLAFLPIFYVTSSDYRVQTTTMCVSVSLSGSVVLGCLFAPKLHIILFQPQKNVVSHRAPTSRFGSAAARASSSLGQGSGSQFVPTVCNGREVVDSTTSSL.

A signal peptide spans 1–18 (MGSLLALLALLLLWGAVA). The Extracellular portion of the chain corresponds to 19–567 (EGPAKKVLTL…QEYIRWGDAW (549 aa)). Cysteine 50 and cysteine 92 are disulfide-bonded. The L-glutamate site is built by arginine 57, arginine 61, serine 145, alanine 166, and threonine 168. N-linked (GlcNAc...) asparagine glycans are attached at residues asparagine 203 and asparagine 286. 7 cysteine pairs are disulfide-bonded: cysteine 234/cysteine 518, cysteine 355/cysteine 362, cysteine 400/cysteine 407, cysteine 500/cysteine 519, cysteine 504/cysteine 522, cysteine 525/cysteine 537, and cysteine 540/cysteine 553. L-glutamate is bound at residue aspartate 295. Asparagine 338 carries an N-linked (GlcNAc...) asparagine glycan. Lysine 377 serves as a coordination point for L-glutamate. N-linked (GlcNAc...) asparagine glycosylation occurs at asparagine 402. Asparagine 547 carries an N-linked (GlcNAc...) asparagine glycan. A helical transmembrane segment spans residues 568–590 (AVGPVTIACLGALATLFVLGVFV). Topologically, residues 591–604 (RHNATPVVKASGRE) are cytoplasmic. Residues 605–625 (LCYILLGGVFLCYCMTFIFIA) form a helical membrane-spanning segment. At 626-636 (KPSTAVCTLRR) the chain is on the extracellular side. Cysteine 632 and cysteine 721 are joined by a disulfide. A helical membrane pass occupies residues 637 to 655 (LGLGTAFSVCYSALLTKTN). The Cytoplasmic portion of the chain corresponds to 656 to 679 (RIARIFGGAREGAQRPRFISPASQ). Residues 677-685 (ASQVAICLA) are important for interaction with HTR2A. The chain crosses the membrane as a helical span at residues 680–700 (VAICLALISGQLLIVVAWLVV). The Extracellular segment spans residues 701 to 725 (EAPGTGKETAPERREVVTLRCNHRD). A helical membrane pass occupies residues 726 to 747 (ASMLGSLAYNVLLIALCTLYAF). At 748-760 (KTRKCPENFNEAK) the chain is on the cytoplasmic side. A helical transmembrane segment spans residues 761 to 783 (FIGFTMYTTCIIWLAFLPIFYVT). Residues 784–793 (SSDYRVQTTT) are Extracellular-facing. The helical transmembrane segment at 794–819 (MCVSVSLSGSVVLGCLFAPKLHIILF) threads the bilayer. Residues 820–872 (QPQKNVVSHRAPTSRFGSAAARASSSLGQGSGSQFVPTVCNGREVVDSTTSSL) lie on the Cytoplasmic side of the membrane.

The protein belongs to the G-protein coupled receptor 3 family. In terms of assembly, forms heterodimers with GRM3 or GRM4. Interacts with TAMALIN. Interacts with HTR2A. (Microbial infection) Interacts with H5N6 virus protein HA. As to quaternary structure, (Microbial infection) Interacts with rabies virus protein G. In terms of assembly, (Microbial infection) Interacts with SARS-CoV-2 virus spike protein S. In terms of tissue distribution, detected in brain cortex (at protein level). Widely expressed in different regions of the adult brain as well as in fetal brain.

The protein localises to the cell membrane. The protein resides in the synapse. It localises to the cell projection. Its subcellular location is the dendrite. Its function is as follows. Dimeric G protein-coupled receptor which is activated by the excitatory neurotransmitter L-glutamate. Plays critical roles in modulating synaptic transmission and neuronal excitability. Upon activation by glutamate, inhibits presynaptic calcium channels, reducing further glutamate release and dampening excitatory signaling. Mechanistically, ligand binding causes a conformation change that triggers signaling via guanine nucleotide-binding proteins (G proteins) and modulates the activity of down-stream effectors, such as adenylate cyclase. May mediate suppression of neurotransmission or may be involved in synaptogenesis or synaptic stabilization. (Microbial infection) Plays an important role in influenza virus internalization. In terms of biological role, (Microbial infection) Acts as a host entry factor for rabies virus that hijacks the endocytosis of GRM2 to enter cells. Functionally, (Microbial infection) Acts as a host entry factor for SARS-CoV-2 that hijacks the endocytosis of GRM2 to enter cells. In Homo sapiens (Human), this protein is Metabotropic glutamate receptor 2.